An 827-amino-acid polypeptide reads, in one-letter code: Carnosine synthase 1 (827 aa).

An ATP-grasp domain is found at 516–720 (GPPWPSTSLH…LLLASTMVAC (205 aa)). 542–611 (IYQVPLPGVM…MEFVEGTEHD (70 aa)) contributes to the ATP binding site. Glu677, Glu689, and Asn691 together coordinate Mg(2+). Mn(2+) is bound by residues Glu677, Glu689, and Asn691.

Homotetramer. The cofactor is Mg(2+). Requires Mn(2+) as cofactor.

It catalyses the reaction beta-alanine + L-histidine + ATP = carnosine + ADP + phosphate + H(+). The enzyme catalyses 4-aminobutanoate + L-histidine + ATP = L-homocarnosine + ADP + phosphate + H(+). Functionally, catalyzes the synthesis of carnosine and homocarnosine. Carnosine is synthesized more efficiently than homocarnosine. This Mus musculus (Mouse) protein is Carnosine synthase 1.